We begin with the raw amino-acid sequence, 655 residues long: Sphingomyelin phosphodiesterase 3 (655 aa).

At 1–10 (MVLYTTPFPN) the chain is on the cytoplasmic side. Residues 11 to 31 (SCLSALHAVSWALIFPCYWLV) constitute an intramembrane region (helical). The Cytoplasmic segment spans residues 32–64 (DRLVASFIPTTYEKRQRADDPCYLQLFCTVLFT). S-palmitoyl cysteine attachment occurs at residues Cys53 and Cys59. An intramembrane region (helical) is located at residues 65 to 85 (PVYLALLVAALPFAFLGFIFW). The Cytoplasmic segment spans residues 86–655 (SPLQSARRPY…LMVSAGEEEA (570 aa)). Ser178 is subject to Phosphoserine. Disordered regions lie at residues 209–237 (VEYKGDGGRHPSDEAANGPASGEQADGSL) and 250–320 (GGRA…SNSK). Residues 211–221 (YKGDGGRHPSD) show a composition bias toward basic and acidic residues. Ser289 carries the post-translational modification Phosphoserine. Glu362 contributes to the Mg(2+) binding site. S-palmitoyl cysteine attachment occurs at residues Cys395 and Cys396. His639 acts as the Proton acceptor in catalysis.

This sequence belongs to the neutral sphingomyelinase family. The cofactor is Mg(2+). Palmitoylated, palmitoylation-deficient proteins are targeted for lysosomal degradation. In brain sections, it is restricted to neurons and especially prominent in large cells, including Purkinje cells, pyramidal cells, neurons of the dentate gyrus granular layer, and neurons in the pontine nuclei. Also present in the hypothalamic nuclei, neurons in the piriform cortex, and nuclei of the brainstem (at protein level). Mainly expressed in brain and jejunum. Weakly or not expressed in heart, spleen, lung, liver, kidney and testis.

The protein resides in the golgi apparatus membrane. It is found in the cell membrane. It carries out the reaction a sphingomyelin + H2O = phosphocholine + an N-acylsphing-4-enine + H(+). The catalysed reaction is N-(15Z-tetracosenoyl)sphing-4-enine-1-phosphocholine + H2O = N-(15Z-tetracosenoyl)-sphing-4-enine + phosphocholine + H(+). The enzyme catalyses N-(tetracosanoyl)-sphing-4-enine-1-phosphocholine + H2O = N-tetracosanoyl-sphing-4-enine + phosphocholine + H(+). It catalyses the reaction an N-(acyl)-sphingosylphosphocholine + H2O = an N-acyl-sphingoid base + phosphocholine + H(+). It carries out the reaction 1-hexadecanoyl-sn-glycero-3-phosphocholine + H2O = 1-hexadecanoyl-sn-glycerol + phosphocholine + H(+). The catalysed reaction is 1-O-octadecyl-sn-glycero-3-phosphocholine + H2O = 1-O-octadecyl-sn-glycerol + phosphocholine + H(+). The enzyme catalyses a sphingosylphosphocholine + H2O = a sphingoid base + phosphocholine + H(+). It catalyses the reaction N-(hexadecanoyl)-sphing-4-enine-1-phosphocholine + H2O = N-hexadecanoylsphing-4-enine + phosphocholine + H(+). Its pathway is lipid metabolism; sphingolipid metabolism. With respect to regulation, inhibited by nSMase inhibitor GW4869. Binding of anionic phospholipids (APLs) such as phosphatidylserine (PS) and phosphatidic acid (PA) increases enzymatic activity. Catalyzes the hydrolysis of sphingomyelin to form ceramide and phosphocholine. Ceramide mediates numerous cellular functions, such as apoptosis and growth arrest, and is capable of regulating these 2 cellular events independently. Also hydrolyzes sphingosylphosphocholine. Binds to anionic phospholipids (APLs) such as phosphatidylserine (PS) and phosphatidic acid (PA) that modulate enzymatic activity and subcellular location. Regulates the cell cycle by acting as a growth suppressor in confluent cells. Acts as a regulator of postnatal development and participates in bone and dentin mineralization. May be involved in IL-1-beta-induced JNK activation in hepatocytes. May act as a mediator in transcriptional regulation of NOS2/iNOS via the NF-kappa-B activation under inflammatory conditions. This is Sphingomyelin phosphodiesterase 3 from Rattus norvegicus (Rat).